The primary structure comprises 337 residues: Mediator of RNA polymerase II transcription subunit 19 (337 aa).

Disordered regions lie at residues Met1–Ile38, Tyr155–Gly234, and Gln297–Phe337. Polar residues predominate over residues Gln28–Ile38. Basic residues-rich tracts occupy residues Ala159–His171 and Arg208–Asn221. A coiled-coil region spans residues Leu189–Ser223. Low complexity predominate over residues Gln297–Gly309. Positions Thr310–Gly330 are enriched in gly residues.

This sequence belongs to the Mediator complex subunit 19 family. In terms of assembly, component of the Mediator complex.

The protein resides in the nucleus. Its function is as follows. Component of the Mediator complex, a coactivator involved in the regulated transcription of nearly all RNA polymerase II-dependent genes. Mediator functions as a bridge to convey information from gene-specific regulatory proteins to the basal RNA polymerase II transcription machinery. Mediator is recruited to promoters by direct interactions with regulatory proteins and serves as a scaffold for the assembly of a functional preinitiation complex with RNA polymerase II and the general transcription factors. The polypeptide is Mediator of RNA polymerase II transcription subunit 19 (MED19) (Drosophila melanogaster (Fruit fly)).